A 1341-amino-acid polypeptide reads, in one-letter code: DNA-directed RNA polymerase subunit beta (1341 aa).

It belongs to the RNA polymerase beta chain family. As to quaternary structure, the RNAP catalytic core consists of 2 alpha, 1 beta, 1 beta' and 1 omega subunit. When a sigma factor is associated with the core the holoenzyme is formed, which can initiate transcription.

The enzyme catalyses RNA(n) + a ribonucleoside 5'-triphosphate = RNA(n+1) + diphosphate. Functionally, DNA-dependent RNA polymerase catalyzes the transcription of DNA into RNA using the four ribonucleoside triphosphates as substrates. This chain is DNA-directed RNA polymerase subunit beta, found in Vibrio cholerae serotype O1 (strain ATCC 39315 / El Tor Inaba N16961).